Consider the following 82-residue polypeptide: ATP synthase subunit c, chloroplastic (82 aa).

A run of 2 helical transmembrane segments spans residues 7-27 and 57-77; these read AASVVASGLSVGLAAIGPGIG and LAFMESLTIYGLVVALALLFA.

Belongs to the ATPase C chain family. In terms of assembly, F-type ATPases have 2 components, F(1) - the catalytic core - and F(0) - the membrane proton channel. F(1) has five subunits: alpha(3), beta(3), gamma(1), delta(1), epsilon(1). F(0) has four main subunits: a(1), b(1), b'(1) and c(10-14). The alpha and beta chains form an alternating ring which encloses part of the gamma chain. F(1) is attached to F(0) by a central stalk formed by the gamma and epsilon chains, while a peripheral stalk is formed by the delta, b and b' chains.

The protein localises to the plastid. It is found in the chloroplast thylakoid membrane. In terms of biological role, f(1)F(0) ATP synthase produces ATP from ADP in the presence of a proton or sodium gradient. F-type ATPases consist of two structural domains, F(1) containing the extramembraneous catalytic core and F(0) containing the membrane proton channel, linked together by a central stalk and a peripheral stalk. During catalysis, ATP synthesis in the catalytic domain of F(1) is coupled via a rotary mechanism of the central stalk subunits to proton translocation. Its function is as follows. Key component of the F(0) channel; it plays a direct role in translocation across the membrane. A homomeric c-ring of between 10-14 subunits forms the central stalk rotor element with the F(1) delta and epsilon subunits. The polypeptide is ATP synthase subunit c, chloroplastic (Rhodomonas salina (Cryptomonas salina)).